A 324-amino-acid polypeptide reads, in one-letter code: tRNA uridine(34) hydroxylase (324 aa).

The 95-residue stretch at 145–239 folds into the Rhodanese domain; sequence NDKKTIFIDM…YVHDARKNGL (95 aa). Cys199 serves as the catalytic Cysteine persulfide intermediate.

It belongs to the TrhO family.

The enzyme catalyses uridine(34) in tRNA + AH2 + O2 = 5-hydroxyuridine(34) in tRNA + A + H2O. Its function is as follows. Catalyzes oxygen-dependent 5-hydroxyuridine (ho5U) modification at position 34 in tRNAs. This chain is tRNA uridine(34) hydroxylase, found in Buchnera aphidicola subsp. Acyrthosiphon pisum (strain Tuc7).